Reading from the N-terminus, the 203-residue chain is Endo-type membrane-bound lytic murein transglycosylase A (203 aa).

The N-terminal stretch at 1-15 is a signal peptide; it reads MKLRWFAFLVVLLAG. A lipid anchor (N-palmitoyl cysteine) is attached at Cys-16. Cys-16 carries S-diacylglycerol cysteine lipidation.

This sequence belongs to the transglycosylase Slt family.

Its subcellular location is the cell outer membrane. The catalysed reaction is Endolytic cleavage of the (1-&gt;4)-beta-glycosidic linkage between N-acetylmuramic acid (MurNAc) and N-acetylglucosamine (GlcNAc) residues in peptidoglycan with concomitant formation of a 1,6-anhydrobond in the MurNAc residue.. Murein-degrading enzyme. May play a role in recycling of muropeptides during cell elongation and/or cell division. Preferentially cleaves at a distance of more than two disaccharide units from the ends of the glycan chain. The chain is Endo-type membrane-bound lytic murein transglycosylase A from Escherichia fergusonii (strain ATCC 35469 / DSM 13698 / CCUG 18766 / IAM 14443 / JCM 21226 / LMG 7866 / NBRC 102419 / NCTC 12128 / CDC 0568-73).